The chain runs to 359 residues: Halocin-H4 (359 aa).

Residues 1 to 46 form the signal peptide; sequence MSKDRDGRRTSRRGTLKKIGGFSLGALSFGAVGRTQAATGSSVTTA. Disordered regions lie at residues 40 to 59 and 340 to 359; these read GSSV…DPKS and IPDR…SRKQ.

It localises to the secreted. Its function is as follows. Has antibacterial activity against other haloarchaeons. Interacts with the membrane of the target cells where it causes permeability changes that result in an ionic imbalance leading to cell lysis and death. This Haloferax mediterranei (strain ATCC 33500 / DSM 1411 / JCM 8866 / NBRC 14739 / NCIMB 2177 / R-4) (Halobacterium mediterranei) protein is Halocin-H4 (halH4).